A 1697-amino-acid chain; its full sequence is Neurexin-3a (1697 aa).

Positions 1-23 (MNFFRFPVQLQLLISTVLGPCLG) are cleaved as a signal peptide. The Laminin G-like 1 domain occupies 24–198 (LEFTGLQGQW…RVRMDIEGIC (175 aa)). The Extracellular portion of the chain corresponds to 24-1622 (LEFTGLQGQW…EVVRESSSTT (1599 aa)). The EGF-like 1 domain occupies 194 to 231 (IEGICMENPCENGGTCSVVDGEPLCDCSKTEYVGRFCN). 3 cysteine pairs are disulfide-bonded: Cys198/Cys209, Cys203/Cys218, and Cys220/Cys230. Laminin G-like domains lie at 258 to 455 (VATF…VFKC) and 462 to 654 (DPIS…KPSC). Ca(2+) contacts are provided by Asp304, Leu321, and Met389. Intrachain disulfides connect Cys419–Cys455, Cys625–Cys654, Cys662–Cys673, Cys667–Cys682, and Cys684–Cys694. The 38-residue stretch at 658–695 (SGKQCDSYPCKNKGLCKEGWNRFICDCTGTGYWSRTCE) folds into the EGF-like 2 domain. Laminin G-like domains follow at residues 700–872 (ILSY…IDFC) and 886–1061 (DPVT…ERGC). Disulfide bonds link Cys1033-Cys1061, Cys1077-Cys1088, Cys1082-Cys1097, and Cys1099-Cys1109. The EGF-like 3 domain maps to 1073–1110 (PSTTCQEDSCANMGICIQQWENYTCDCSMTSYTGTHCN). A Laminin G-like 6 domain is found at 1114-1314 (TTYIFGKGGG…NPNIKINGSV (201 aa)). 3 disordered regions span residues 1345 to 1366 (TMST…TDDM), 1442 to 1479 (LSDG…NLPP), and 1520 to 1557 (PNKV…KMNH). Acidic residues predominate over residues 1446-1461 (GSDDCGDDDDDDDDDG). The segment covering 1527-1547 (GRTTTASFSPKLSRSTTTSTP) has biased composition (polar residues). A helical transmembrane segment spans residues 1623-1643 (GMVVGIVAAAALCILILLYAM). Residues 1644 to 1697 (YKYRNRDEGSYQVDETRNYITNSAQSNGAVMKDKQQSTKSGNKKQKNKDKEYYV) lie on the Cytoplasmic side of the membrane. Positions 1665-1697 (NSAQSNGAVMKDKQQSTKSGNKKQKNKDKEYYV) are disordered.

This sequence belongs to the neurexin family.

The protein localises to the membrane. Neuronal cell surface protein that may be involved in cell recognition and cell adhesion. The chain is Neurexin-3a (nrxn3a) from Danio rerio (Zebrafish).